Reading from the N-terminus, the 702-residue chain is Choline transporter-like protein 5-A (702 aa).

Residues 21–41 (VLCCVLFVIVILGYIALGTVA) traverse the membrane as a helical segment. The Extracellular portion of the chain corresponds to 42–225 (WIHGDPRKVI…KIVEDYASCW (184 aa)). 3 N-linked (GlcNAc...) asparagine glycosylation sites follow: asparagine 120, asparagine 173, and asparagine 180. The helical transmembrane segment at 226–246 (YWIVIGLFIALVISLIFILLL) threads the bilayer. Residues 247–249 (RFT) are Cytoplasmic-facing. The helical transmembrane segment at 250-270 (AGFLLWFIIFAVILLVAYGIW) threads the bilayer. Over 271–308 (HCYWEFAVLRETPGADVTISDIGFQTDLHVYLQLSQTW) the chain is Extracellular. A helical membrane pass occupies residues 309–329 (LVFMVTLGLTEASIVLMLIFL). At 330–334 (RKRVR) the chain is on the cytoplasmic side. Residues 335-355 (IAIALLREGSRAISYIMSALF) traverse the membrane as a helical segment. Topologically, residues 356–357 (YP) are extracellular. A helical membrane pass occupies residues 358-378 (IITFVLLAICISYWAMTALFL). The Cytoplasmic segment spans residues 379–443 (ASSGDAVYKV…RYIFILQLCN (65 aa)). The helical transmembrane segment at 444–464 (LLVFLWLVNFTIALGQCTVAG) threads the bilayer. At 465-498 (AFASYYWARRKPADIPPCPVFSSFSRALRYHTGS) the chain is on the extracellular side. Residues 499 to 519 (LAFGSLILAVVQLIRVILEYL) traverse the membrane as a helical segment. Topologically, residues 520 to 593 (DHKLKGAHNA…RVAVLDKVTD (74 aa)) are cytoplasmic. Residues 594 to 614 (FLLFLGKLLIAGSVGVIAFFL) traverse the membrane as a helical segment. Topologically, residues 615-632 (FTRKIPIIQEEVPVLNYY) are extracellular. A helical membrane pass occupies residues 633-653 (CVPLLTVILGSYLIAHSFFSV). The Cytoplasmic portion of the chain corresponds to 654–699 (YAMCVDTLFLCFCEDLERNDGTTAKPFFMSPGLKRILGKAEQSPKK).

It belongs to the CTL (choline transporter-like) family.

Its subcellular location is the cell membrane. It carries out the reaction choline(out) + n H(+)(in) = choline(in) + n H(+)(out). Its function is as follows. Choline/H+ antiporter. In Danio rerio (Zebrafish), this protein is Choline transporter-like protein 5-A (slc44a5a).